The primary structure comprises 321 residues: Digestive cysteine proteinase 3 (321 aa).

The signal sequence occupies residues 1-16; sequence MKVAALFLCGLALATA. The propeptide at 17 to 106 is activation peptide; sequence SPSWDHFKTQ…AVFTAEAGPM (90 aa). 3 cysteine pairs are disulfide-bonded: C127–C170, C161–C203, and C261–C310. C130 is a catalytic residue. Residues H268 and N288 contribute to the active site.

The protein belongs to the peptidase C1 family.

Inhibited by E-64, antipain, leupeptin, heavy metal ions, iodoacetic acid, dithionitrobenzene, p-hydroxymercuri-benzoate; activated by mercaptoethanol and dithiothreitol. The polypeptide is Digestive cysteine proteinase 3 (LCP3) (Homarus americanus (American lobster)).